We begin with the raw amino-acid sequence, 386 residues long: Methionyl-tRNA formyltransferase, mitochondrial (386 aa).

This sequence belongs to the Fmt family.

Its subcellular location is the mitochondrion. It carries out the reaction L-methionyl-tRNA(fMet) + (6R)-10-formyltetrahydrofolate = N-formyl-L-methionyl-tRNA(fMet) + (6S)-5,6,7,8-tetrahydrofolate + H(+). Its function is as follows. Methionyl-tRNA formyltransferase that formylates methionyl-tRNA in mitochondria and is crucial for translation initiation. The sequence is that of Methionyl-tRNA formyltransferase, mitochondrial (Mtfmt) from Mus musculus (Mouse).